A 34-amino-acid polypeptide reads, in one-letter code: Kappa-theraphotoxin-Sc1a (34 aa).

Cystine bridges form between cysteine 2–cysteine 16, cysteine 9–cysteine 21, and cysteine 15–cysteine 28. The residue at position 34 (isoleucine 34) is an Isoleucine amide.

It belongs to the neurotoxin 10 (Hwtx-1) family. 57 (ScTx1) subfamily. As to expression, expressed by the venom gland.

Its subcellular location is the secreted. Its function is as follows. Acts as a gating-modifier to inhibit voltage-gated potassium channels. It inhibits delayed Kv2.1/KCNB1 (IC(50) is 12.7 nM), Kv2.1/Kv9.3 (IC(50) is 7.2 nM) (KCNB1/KCNS3), Kv2.2/KCNB2 (IC(50) is 21.4 nM), and transient Kv4.2/KCND2 (IC(50) is 1.2 nM) channels. In Stromatopelma calceatum (Featherleg baboon tarantula), this protein is Kappa-theraphotoxin-Sc1a.